The sequence spans 124 residues: MATINQLVRKPRIKLVVKSNVPALEACPQKRGVCTRVYTTTPKKPNSALRKVCRVRLTNGFEVTSYIGGEGHNLQEHSVVLIRGGRVKDLPGVRYHTVRGALDCAGVKDRKQARSKYGVKRPKA.

Aspartate 89 bears the 3-methylthioaspartic acid mark.

The protein belongs to the universal ribosomal protein uS12 family. In terms of assembly, part of the 30S ribosomal subunit. Contacts proteins S8 and S17. May interact with IF1 in the 30S initiation complex.

Functionally, with S4 and S5 plays an important role in translational accuracy. In terms of biological role, interacts with and stabilizes bases of the 16S rRNA that are involved in tRNA selection in the A site and with the mRNA backbone. Located at the interface of the 30S and 50S subunits, it traverses the body of the 30S subunit contacting proteins on the other side and probably holding the rRNA structure together. The combined cluster of proteins S8, S12 and S17 appears to hold together the shoulder and platform of the 30S subunit. The protein is Small ribosomal subunit protein uS12 of Aeromonas hydrophila subsp. hydrophila (strain ATCC 7966 / DSM 30187 / BCRC 13018 / CCUG 14551 / JCM 1027 / KCTC 2358 / NCIMB 9240 / NCTC 8049).